A 306-amino-acid polypeptide reads, in one-letter code: HKEEELLGSSGGPPPEEPPKEGNPAEINVERDEKLIKVLDKLLLYLRIVHSLDYYNTCEYPNEDEMPNRCGIIHVRGPMPPNRISHGEVLEWQKTFEEKLTPLLSVRESLSEEEAQKMGRKDTEQEVEKFVTSNTQELGKDKWLCPLSGKKFKGPEFVRKHIFNKHAEKIEEVKKEVAFFNNFLTDAKRPALPEMKPAQPPGPAQILPPGLTPGLPYPHQTPQGLMPYGQPALPIFGYGAGAVRPAVPTGGPPYPHGPYGAGRGNYDAFRGQGGYPGKPRNRMVRGDPRAIVEYRDLDAPDDVDFF.

The segment at 1–28 (HKEEELLGSSGGPPPEEPPKEGNPAEIN) is disordered. Threonine 101 is subject to Phosphothreonine. Serine 109 is subject to Phosphoserine. The disordered stretch occupies residues 251–284 (GPPYPHGPYGAGRGNYDAFRGQGGYPGKPRNRMV). Omega-N-methylarginine occurs at positions 263, 270, and 280.

This sequence belongs to the ARS2 family. In terms of assembly, interacts with CASP8AP2, ERBB4, NCBP1/CBP80 and DROSHA. Interacts with LUZP4. Interacts with NCBP2/CBP20 and NCBP3.

The protein localises to the nucleus. It localises to the nucleoplasm. Its subcellular location is the cytoplasm. Acts as a mediator between the cap-binding complex (CBC) and the primary microRNAs (miRNAs) processing machinery during cell proliferation. Contributes to the stability and delivery of capped primary miRNA transcripts to the primary miRNA processing complex containing DGCR8 and DROSHA, thereby playing a role in RNA-mediated gene silencing (RNAi) by miRNAs. Binds capped RNAs (m7GpppG-capped RNA); however interaction is probably mediated via its interaction with NCBP1/CBP80 component of the CBC complex. Involved in cell cycle progression at S phase. Does not directly confer arsenite resistance but rather modulates arsenic sensitivity. Independently of its activity on miRNAs, necessary and sufficient to promote neural stem cell self-renewal. Does so by directly binding SOX2 promoter and positively regulating its transcription. The polypeptide is Serrate RNA effector molecule homolog (SRRT) (Cricetulus griseus (Chinese hamster)).